Reading from the N-terminus, the 349-residue chain is Protein RecA (349 aa).

Residue 65 to 72 participates in ATP binding; that stretch reads GPESSGKT. The tract at residues 329 to 349 is disordered; the sequence is FDGDVDENENEDDSPKTLFDE. Residues 331–340 are compositionally biased toward acidic residues; the sequence is GDVDENENED.

It belongs to the RecA family.

Its subcellular location is the cytoplasm. Functionally, can catalyze the hydrolysis of ATP in the presence of single-stranded DNA, the ATP-dependent uptake of single-stranded DNA by duplex DNA, and the ATP-dependent hybridization of homologous single-stranded DNAs. It interacts with LexA causing its activation and leading to its autocatalytic cleavage. This chain is Protein RecA, found in Staphylococcus epidermidis (strain ATCC 35984 / DSM 28319 / BCRC 17069 / CCUG 31568 / BM 3577 / RP62A).